The sequence spans 243 residues: High affinity immunoglobulin epsilon receptor subunit beta (243 aa).

The interval 1–48 (MDTENKSRADLALPNPQESPSAPDIELLEASPPAKALPEKPASPPPQQ) is disordered. The Cytoplasmic portion of the chain corresponds to 1 to 59 (MDTENKSRADLALPNPQESPSAPDIELLEASPPAKALPEKPASPPPQQTWQSFLKKELE). The chain crosses the membrane as a helical span at residues 60-79 (FLGVTQVLVGLICLCFGTVV). Topologically, residues 80 to 97 (CSTLQTSDFDDEVLLLYR) are extracellular. A helical transmembrane segment spans residues 98–117 (AGYPFWGAVLFVLSGFLSIM). Residues 118 to 130 (SERKNTLYLVRGS) lie on the Cytoplasmic side of the membrane. A helical transmembrane segment spans residues 131–150 (LGANIVSSIAAGLGIAILIL). Residues 151–179 (NLSNNSAYMNYCKDITEDDGCFVTSFITE) are Extracellular-facing. A helical membrane pass occupies residues 180 to 199 (LVLMLLFLTILAFCSAVLLI). The Cytoplasmic segment spans residues 200 to 243 (IYRIGQEFERSKVPDDRLYEELHVYSPIYSALEDTREASAPVVS). A phosphotyrosine mark is found at Tyr-218 and Tyr-224. At Ser-225 the chain carries Phosphoserine. Tyr-228 carries the phosphotyrosine modification.

Belongs to the MS4A family. As to quaternary structure, tetramer of an alpha chain, a beta chain, and two disulfide linked gamma chains. Binds LILRB1. Interacts with FES/FPS and LYN. Interacts with FGR. In terms of processing, phosphorylated on tyrosine residues by LYN.

The protein resides in the membrane. High affinity receptor that binds to the Fc region of immunoglobulins epsilon. Aggregation of FCER1 by multivalent antigens is required for the full mast cell response, including the release of preformed mediators (such as histamine) by degranulation and de novo production of lipid mediators and cytokines. Also mediates the secretion of important lymphokines. Binding of allergen to receptor-bound IgE leads to cell activation and the release of mediators responsible for the manifestations of allergy. The protein is High affinity immunoglobulin epsilon receptor subunit beta (Ms4a2) of Rattus norvegicus (Rat).